The following is a 301-amino-acid chain: Tyrosine recombinase XerD (301 aa).

A Core-binding (CB) domain is found at 7–90; that stretch reads QFHTTILEQF…ALKVFFLFLK (84 aa). Positions 109-294 constitute a Tyr recombinase domain; the sequence is RLPSVLTPQE…AADSLIEKFL (186 aa). Active-site residues include Arg-153, Lys-175, His-246, Arg-249, and His-272. Tyr-281 acts as the O-(3'-phospho-DNA)-tyrosine intermediate in catalysis.

It belongs to the 'phage' integrase family. XerD subfamily. As to quaternary structure, forms a cyclic heterotetrameric complex composed of two molecules of XerC and two molecules of XerD.

It localises to the cytoplasm. In terms of biological role, site-specific tyrosine recombinase, which acts by catalyzing the cutting and rejoining of the recombining DNA molecules. The XerC-XerD complex is essential to convert dimers of the bacterial chromosome into monomers to permit their segregation at cell division. It also contributes to the segregational stability of plasmids. This is Tyrosine recombinase XerD from Chlamydia pneumoniae (Chlamydophila pneumoniae).